Consider the following 445-residue polypeptide: Cryptochrome DASH (445 aa).

The Photolyase/cryptochrome alpha/beta domain maps to 4 to 137 (KIGLYWFTFD…VIVQHSVRSL (134 aa)).

It belongs to the DNA photolyase class-1 family. FAD is required as a cofactor. (6R)-5,10-methylene-5,6,7,8-tetrahydrofolate serves as cofactor.

Functionally, may have a photoreceptor function. Binds DNA; probably functions as a transcriptional repressor. The polypeptide is Cryptochrome DASH (cry) (Vibrio parahaemolyticus serotype O3:K6 (strain RIMD 2210633)).